The following is a 110-amino-acid chain: Integration host factor subunit alpha (110 aa).

Belongs to the bacterial histone-like protein family. As to quaternary structure, heterodimer of an alpha and a beta chain.

This protein is one of the two subunits of integration host factor, a specific DNA-binding protein that functions in genetic recombination as well as in transcriptional and translational control. The polypeptide is Integration host factor subunit alpha (Nitrobacter hamburgensis (strain DSM 10229 / NCIMB 13809 / X14)).